The primary structure comprises 723 residues: DNA-binding protein RFX2 (723 aa).

The interval 1–46 is disordered; that stretch reads MQNSEGGADSPASVALRPSAAAPPVPASPQRVLVQAASSNPKGAQM. Over residues 10 to 20 the composition is skewed to low complexity; the sequence is SPASVALRPSA. The residue at position 28 (S28) is a Phosphoserine. The RFX-type winged-helix DNA-binding region spans 199–274; sequence HLQWLLDNYE…YHYYGIRLKP (76 aa). Positions 292-332 are disordered; that stretch reads QQPMHQKPRYRPAQKTDSLGDSGSHSGLHSTPEQTMAVQSQ. Over residues 308–321 the composition is skewed to low complexity; that stretch reads DSLGDSGSHSGLHS. The segment covering 322-332 has biased composition (polar residues); the sequence is TPEQTMAVQSQ. Position 416 is a phosphoserine (S416). Residues 688 to 723 are disordered; it reads MGDEQRGSEAGPDARSLGEPLVKRERSDPNHSLQGI.

Belongs to the RFX family. In terms of assembly, homodimer; probably only forms homodimers in testis. Heterodimer; heterodimerizes with RFX1 and RFX3.

Its subcellular location is the nucleus. The protein resides in the cytoplasm. In terms of biological role, transcription factor that acts as a key regulator of spermatogenesis. Acts by regulating expression of genes required for the haploid phase during spermiogenesis, such as genes required for cilium assembly and function. Recognizes and binds the X-box, a regulatory motif with DNA sequence 5'-GTNRCC(0-3N)RGYAAC-3' present on promoters. Probably activates transcription of the testis-specific histone gene H1-6. This is DNA-binding protein RFX2 (RFX2) from Homo sapiens (Human).